Consider the following 203-residue polypeptide: Sperm-specific protein PHI-2B/PHI-3 (203 aa).

The segment covering 1–35 has biased composition (basic residues); the sequence is MPSPSRKSRSRSRSRSKSPKRSPAKKARKTPKKPR. 2 disordered regions span residues 1 to 46 and 104 to 203; these read MPSP…PSTL and KTSA…KSKK. Residues 41 to 120 form the H15 domain; sequence KKPSTLSMIV…GATGSFRVGK (80 aa). Basic residues-rich tracts occupy residues 126 to 140 and 147 to 203; these read KKAK…KSSK and KAKK…KSKK.

PL-II* and PL-IV are produced by post-translational cleavage of a common precursor. As to expression, sperm.

It is found in the nucleus. It localises to the chromosome. Functionally, linker histones are implicated in chromatin remodeling and/or transcriptional regulation during spermiogenesis, the process of spermatid maturation into spermatozoa. Protamines substitute for histones in the chromatin of sperm during the haploid phase of spermatogenesis. They compact sperm DNA into a highly condensed, stable and inactive complex. This Mytilus trossulus (Blue mussel) protein is Sperm-specific protein PHI-2B/PHI-3.